A 110-amino-acid chain; its full sequence is Large ribosomal subunit protein uL22 (110 aa).

Belongs to the universal ribosomal protein uL22 family. Part of the 50S ribosomal subunit.

Functionally, this protein binds specifically to 23S rRNA; its binding is stimulated by other ribosomal proteins, e.g. L4, L17, and L20. It is important during the early stages of 50S assembly. It makes multiple contacts with different domains of the 23S rRNA in the assembled 50S subunit and ribosome. The globular domain of the protein is located near the polypeptide exit tunnel on the outside of the subunit, while an extended beta-hairpin is found that lines the wall of the exit tunnel in the center of the 70S ribosome. This chain is Large ribosomal subunit protein uL22, found in Verminephrobacter eiseniae (strain EF01-2).